Here is a 452-residue protein sequence, read N- to C-terminus: Probable E3 ubiquitin-protein ligase ARI15 (452 aa).

Positions 22 to 256 (SRVYCGICSN…GTSGSCLAPA (235 aa)) are TRIAD supradomain. C26, C29, C54, H56, C59, C62, C83, C88, C128, C133, C154, C156, C161, C164, H169, C174, C208, C211, C229, C231, C236, C239, H246, and C252 together coordinate Zn(2+). The segment at 26–88 (CGICSNIGDD…TAISCPDRDC (63 aa)) adopts an RING-type 1 zinc-finger fold. An IBR-type zinc finger spans residues 106–174 (AMYELYILKS…MLESHRPVTC (69 aa)). The RING-type 2; atypical zinc-finger motif lies at 208-239 (CPHCFIPVEIDGERPWAQFLTCVCSGRFCWKC). A RanBP2-type zinc finger spans residues 414 to 445 (NYGGPYWLCDRCTYGNSWFQRACKMCCDPTAS).

It belongs to the RBR family. Ariadne subfamily. Requires Zn(2+) as cofactor. As to expression, ubiquitous.

The catalysed reaction is [E2 ubiquitin-conjugating enzyme]-S-ubiquitinyl-L-cysteine + [acceptor protein]-L-lysine = [E2 ubiquitin-conjugating enzyme]-L-cysteine + [acceptor protein]-N(6)-ubiquitinyl-L-lysine.. Its pathway is protein modification; protein ubiquitination. Functionally, might act as an E3 ubiquitin-protein ligase, or as part of E3 complex, which accepts ubiquitin from specific E2 ubiquitin-conjugating enzymes and then transfers it to substrates. This Arabidopsis thaliana (Mouse-ear cress) protein is Probable E3 ubiquitin-protein ligase ARI15 (ARI15).